We begin with the raw amino-acid sequence, 47 residues long: DRDSCVDKSRCAKYGYYGQCEVCCKKAGHNGGTCMFFKCMCVNSKMN.

4 disulfides stabilise this stretch: Cys5/Cys23, Cys11/Cys34, Cys20/Cys39, and Cys24/Cys41.

Belongs to the ergtoxin family. Gamma-KTx 5 subfamily. As to expression, expressed by the venom gland.

Its subcellular location is the secreted. Its function is as follows. Reversibly blocks Kv11/ERG potassium channels. This chain is Potassium channel toxin gamma-KTx 5.1, found in Centruroides sculpturatus (Arizona bark scorpion).